We begin with the raw amino-acid sequence, 305 residues long: UDP-N-acetylenolpyruvoylglucosamine reductase 2 (305 aa).

The 165-residue stretch at 33 to 197 (VGGKADVFVA…LEARFELEEG (165 aa)) folds into the FAD-binding PCMH-type domain. Arg176 is a catalytic residue. Residue Ser226 is the Proton donor of the active site. Glu296 is an active-site residue.

Belongs to the MurB family. FAD is required as a cofactor.

It localises to the cytoplasm. The catalysed reaction is UDP-N-acetyl-alpha-D-muramate + NADP(+) = UDP-N-acetyl-3-O-(1-carboxyvinyl)-alpha-D-glucosamine + NADPH + H(+). Its pathway is cell wall biogenesis; peptidoglycan biosynthesis. Its function is as follows. Cell wall formation. The chain is UDP-N-acetylenolpyruvoylglucosamine reductase 2 from Bacillus cereus (strain ATCC 10987 / NRS 248).